The following is a 200-amino-acid chain: Casparian strip membrane protein 2 (200 aa).

Residues M1–K37 lie on the Cytoplasmic side of the membrane. Residues G38–A58 traverse the membrane as a helical segment. At S59–Q88 the chain is on the extracellular side. Residues F89–I109 form a helical membrane-spanning segment. Over V110–R121 the chain is Cytoplasmic. A helical membrane pass occupies residues I122–A142. Residues A143–S175 are Extracellular-facing. N153 carries N-linked (GlcNAc...) asparagine glycosylation. A helical transmembrane segment spans residues V176 to A196. Residues L197 to Y200 lie on the Cytoplasmic side of the membrane.

It belongs to the Casparian strip membrane proteins (CASP) family. As to quaternary structure, homodimer and heterodimers.

The protein resides in the cell membrane. Its function is as follows. Regulates membrane-cell wall junctions and localized cell wall deposition. Required for establishment of the Casparian strip membrane domain (CSD) and the subsequent formation of Casparian strips, a cell wall modification of the root endodermis that determines an apoplastic barrier between the intraorganismal apoplasm and the extraorganismal apoplasm and prevents lateral diffusion. The sequence is that of Casparian strip membrane protein 2 from Ricinus communis (Castor bean).